The primary structure comprises 69 residues: uncharacterized protein (69 aa).

A disordered region spans residues 22 to 48; the sequence is LFRKSRELSPIKPVRTPTPPAPTPPPM. Residues 37-48 show a composition bias toward pro residues; that stretch reads TPTPPAPTPPPM.

This is an uncharacterized protein from Lepidoptera (butterflies and moths).